A 201-amino-acid chain; its full sequence is MPVGVPKVPYRLPGDVQVQWIDLYNRLYRERILFLGQTVNYEIANQIIGLMLYLNGDDKSKDMYLYINSPGGAVVPGIAIYDTMQFVEPEIRTICMGVAASMGSFILTGGEITKRIALPHARVMIHQPSSSYYKDQAGELIMEAEEVLKLRDCITKVYVQRTGKPISVISEDMERDVFMSAKEAKEYGIVDLVALDVDSNS.

S101 acts as the Nucleophile in catalysis. Residue H126 is part of the active site.

Belongs to the peptidase S14 family. As to quaternary structure, component of the chloroplastic Clp protease core complex.

Its subcellular location is the plastid. The protein localises to the chloroplast stroma. The catalysed reaction is Hydrolysis of proteins to small peptides in the presence of ATP and magnesium. alpha-casein is the usual test substrate. In the absence of ATP, only oligopeptides shorter than five residues are hydrolyzed (such as succinyl-Leu-Tyr-|-NHMec, and Leu-Tyr-Leu-|-Tyr-Trp, in which cleavage of the -Tyr-|-Leu- and -Tyr-|-Trp bonds also occurs).. Cleaves peptides in various proteins in a process that requires ATP hydrolysis. Has a chymotrypsin-like activity. Plays a major role in the degradation of misfolded proteins. In Chaetosphaeridium globosum (Charophycean green alga), this protein is ATP-dependent Clp protease proteolytic subunit.